The following is a 570-amino-acid chain: Sulfite reductase [NADPH] hemoprotein beta-component (570 aa).

Positions 434, 440, 479, and 483 each coordinate [4Fe-4S] cluster. Residue Cys-483 participates in siroheme binding.

It belongs to the nitrite and sulfite reductase 4Fe-4S domain family. In terms of assembly, alpha(8)-beta(8). The alpha component is a flavoprotein, the beta component is a hemoprotein. Requires siroheme as cofactor. [4Fe-4S] cluster serves as cofactor.

It carries out the reaction hydrogen sulfide + 3 NADP(+) + 3 H2O = sulfite + 3 NADPH + 4 H(+). Its pathway is sulfur metabolism; hydrogen sulfide biosynthesis; hydrogen sulfide from sulfite (NADPH route): step 1/1. In terms of biological role, component of the sulfite reductase complex that catalyzes the 6-electron reduction of sulfite to sulfide. This is one of several activities required for the biosynthesis of L-cysteine from sulfate. This Shigella flexneri serotype 5b (strain 8401) protein is Sulfite reductase [NADPH] hemoprotein beta-component.